Consider the following 101-residue polypeptide: Urease subunit beta (101 aa).

The protein belongs to the urease beta subunit family. In terms of assembly, heterotrimer of UreA (gamma), UreB (beta) and UreC (alpha) subunits. Three heterotrimers associate to form the active enzyme.

It is found in the cytoplasm. It carries out the reaction urea + 2 H2O + H(+) = hydrogencarbonate + 2 NH4(+). Its pathway is nitrogen metabolism; urea degradation; CO(2) and NH(3) from urea (urease route): step 1/1. The protein is Urease subunit beta of Ectopseudomonas mendocina (strain ymp) (Pseudomonas mendocina).